Reading from the N-terminus, the 727-residue chain is Glucans biosynthesis glucosyltransferase H (727 aa).

The segment at 18 to 43 (SAMPNERPGAMEPQSLSQMPEGFPRR) is disordered. Transmembrane regions (helical) follow at residues 58–78 (FFVV…MGAV), 94–114 (LFAI…AGFF), 278–298 (LQQF…GWWV), 408–428 (IMAY…LMLA), 460–480 (LFYI…LLLL), 496–516 (ILSV…MMFI), and 572–592 (LLAW…ISAW).

It belongs to the glycosyltransferase 2 family. OpgH subfamily.

Its subcellular location is the cell inner membrane. It participates in glycan metabolism; osmoregulated periplasmic glucan (OPG) biosynthesis. In terms of biological role, involved in the biosynthesis of osmoregulated periplasmic glucans (OPGs). The protein is Glucans biosynthesis glucosyltransferase H of Shewanella sp. (strain ANA-3).